Reading from the N-terminus, the 331-residue chain is Peroxidase 60 (331 aa).

An N-terminal signal peptide occupies residues 1-26; sequence MAVKISTIEVLILSLALLSFGHGCYG. 4 cysteine pairs are disulfide-bonded: Cys-37–Cys-113, Cys-70–Cys-75, Cys-119–Cys-321, and Cys-198–Cys-230. His-68 serves as the catalytic Proton acceptor. The Ca(2+) site is built by Asp-69, Gly-74, Asp-76, and Ser-78. Pro-161 provides a ligand contact to substrate. Heme b is bound at residue His-191. Thr-192 serves as a coordination point for Ca(2+). Asn-245 carries an N-linked (GlcNAc...) asparagine glycan. Residues Ser-248 and Asp-253 each contribute to the Ca(2+) site.

Belongs to the peroxidase family. Classical plant (class III) peroxidase subfamily. Requires heme b as cofactor. It depends on Ca(2+) as a cofactor. In terms of tissue distribution, expressed in roots, slightly in leaves.

The protein resides in the secreted. The catalysed reaction is 2 a phenolic donor + H2O2 = 2 a phenolic radical donor + 2 H2O. Removal of H(2)O(2), oxidation of toxic reductants, biosynthesis and degradation of lignin, suberization, auxin catabolism, response to environmental stresses such as wounding, pathogen attack and oxidative stress. These functions might be dependent on each isozyme/isoform in each plant tissue. This chain is Peroxidase 60 (PER60), found in Arabidopsis thaliana (Mouse-ear cress).